A 122-amino-acid polypeptide reads, in one-letter code: Large ribosomal subunit protein uL14 (122 aa).

This sequence belongs to the universal ribosomal protein uL14 family. In terms of assembly, part of the 50S ribosomal subunit. Forms a cluster with proteins L3 and L19. In the 70S ribosome, L14 and L19 interact and together make contacts with the 16S rRNA in bridges B5 and B8.

Functionally, binds to 23S rRNA. Forms part of two intersubunit bridges in the 70S ribosome. This is Large ribosomal subunit protein uL14 from Staphylococcus epidermidis (strain ATCC 35984 / DSM 28319 / BCRC 17069 / CCUG 31568 / BM 3577 / RP62A).